The primary structure comprises 208 residues: N-(5'-phosphoribosyl)anthranilate isomerase (208 aa).

This sequence belongs to the TrpF family.

The catalysed reaction is N-(5-phospho-beta-D-ribosyl)anthranilate = 1-(2-carboxyphenylamino)-1-deoxy-D-ribulose 5-phosphate. It participates in amino-acid biosynthesis; L-tryptophan biosynthesis; L-tryptophan from chorismate: step 3/5. The protein is N-(5'-phosphoribosyl)anthranilate isomerase of Neisseria meningitidis serogroup B (strain ATCC BAA-335 / MC58).